Reading from the N-terminus, the 788-residue chain is Ribosome biogenesis protein ERB1 (788 aa).

The interval 1-91 (MGDLKGSRKR…SKPIREKSKP (91 aa)) is disordered. Over residues 38–50 (LSDKSHDTEHSSD) the composition is skewed to basic and acidic residues. A compositionally biased stretch (acidic residues) spans 51-78 (SEIELVDDLSSDDGEEYEDEFDSDEIPS). Residues 80 to 91 (IESKPIREKSKP) show a composition bias toward basic and acidic residues. WD repeat units follow at residues 433 to 472 (GHSG…QIWS), 476 to 516 (SDEE…PEME), 613 to 651 (KGGG…LVKI), 654 to 699 (PGAR…RPYK), 703 to 742 (YHQK…DLLS), and 758 to 788 (TGEL…RLWT).

Belongs to the WD repeat BOP1/ERB1 family. Component of the NOP7 complex, composed of ERB1, NOP7 and YTM1. The complex is held together by ERB1, which interacts with NOP7 via its N-terminal domain and with YTM1 via a high-affinity interaction between the seven-bladed beta-propeller domains of the 2 proteins. The NOP7 complex associates with the 66S pre-ribosome.

It localises to the nucleus. Its subcellular location is the nucleolus. It is found in the nucleoplasm. Its function is as follows. Component of the NOP7 complex, which is required for maturation of the 25S and 5.8S ribosomal RNAs and formation of the 60S ribosome. The protein is Ribosome biogenesis protein ERB1 of Ajellomyces capsulatus (strain NAm1 / WU24) (Darling's disease fungus).